The primary structure comprises 2844 residues: Sodium channel protein 60E (2844 aa).

At 1-121 (MSDDQATFND…WSPARRVCVY (121 aa)) the chain is on the cytoplasmic side. The stretch at 107-434 (FLFYPWSPAR…FDPSVLNVKK (328 aa)) is one I repeat. A helical transmembrane segment spans residues 122–145 (IATNQFFDYCVMATILFNCIFLAM). Residues 146 to 151 (TETVEE) lie on the Extracellular side of the membrane. A helical membrane pass occupies residues 152-172 (AEYIFLAIYSIEMVIKIIAKG). The Cytoplasmic portion of the chain corresponds to 173–183 (FLLNKYTYLRN). A helical membrane pass occupies residues 184-202 (PWNWLDFVVITSGYATIGM). Topologically, residues 203–208 (EVGNLA) are extracellular. A helical; Voltage-sensor transmembrane segment spans residues 209 to 228 (GLRTFRVLRALKTVSIMPGL). Topologically, residues 229-244 (KTIINALLHSFRQLAE) are cytoplasmic. Residues 245 to 265 (VMTLTIFCLMVFALFALQVYM) traverse the membrane as a helical segment. The Extracellular portion of the chain corresponds to 266 to 340 (GELRNKCVRQ…PNHGYTNFDN (75 aa)). A disulfide bridge connects residues C272 and C318. Residues N282, N293, and N311 are each glycosylated (N-linked (GlcNAc...) asparagine). Residues 341–365 (FMWSMLTTFQLITLDYWENVYNMVL) constitute an intramembrane region (pore-forming). At 366–374 (ATCGPMSVS) the chain is on the extracellular side. The helical transmembrane segment at 375 to 395 (FFTVVVFFGSFYLINLMLAVV) threads the bilayer. Residues 396–687 (ALSYEEEAEI…QNCLYKVVRD (292 aa)) are Cytoplasmic-facing. The interval 452-610 (ASYSKKKTRR…QDTTNDMGHV (159 aa)) is disordered. Basic residues predominate over residues 455–465 (SKKKTRRKKTK). Positions 469–479 (EGGTNGNGNGS) are enriched in gly residues. Low complexity-rich tracts occupy residues 511–520 (QAQKQYQQME) and 577–586 (SSNSSGVNRE). Acidic residues predominate over residues 593–603 (GVVDDHEEQDT). An II repeat occupies 668–1130 (CTDYESWLQF…ESIELLGQYN (463 aa)). The chain crosses the membrane as a helical span at residues 688–708 (PLFELAITLCIVLNTAFLAME). The Extracellular portion of the chain corresponds to 709 to 718 (HHGMSESFRN). Residues 719 to 743 (ALDVGNKVFTSIFTFECIVKLMALS) form a helical membrane-spanning segment. Topologically, residues 744–749 (KDFFLC) are cytoplasmic. Residues 750-769 (GWNIFDLLIVTASLLDIIFE) traverse the membrane as a helical segment. The Extracellular segment spans residues 770 to 775 (LVDGLS). A helical; Voltage-sensor membrane pass occupies residues 776 to 795 (VLRGLRLLRVLKLAQSWTTM). Topologically, residues 796-810 (KVLLSIIISTIGALG) are cytoplasmic. Residues 811-832 (NLTLILVIVIYIFAVIGMQLFS) traverse the membrane as a helical segment. The Extracellular portion of the chain corresponds to 833 to 852 (KDYTPEKFDPDPVPRWNFND). The segment at residues 853 to 873 (FFHSFMMIFRILCGEWIEPLW) is an intramembrane region (pore-forming). At 874 to 889 (DCMRAEEEQGASTCFA) the chain is on the extracellular side. C875 and C887 are disulfide-bonded. A helical membrane pass occupies residues 890-910 (IFLPTLVMGNFMVLNLFLALL). At 911 to 1742 (LNSFNSEELK…SAKHWTRVRT (832 aa)) the chain is on the cytoplasmic side. Over residues 1129–1157 (YNSTDTDPYANDQRSGCGSFNRGDSLQDN) the composition is skewed to polar residues. Disordered stretches follow at residues 1129-1166 (YNSTDTDPYANDQRSGCGSFNRGDSLQDNSSRRYGSEE), 1185-1224 (YRKSLDRLSQSSGQSQRSLLKSEEAEMRRHSSGQSLNSMS), 1268-1288 (ISNVMRSRRPSSQMGQPENET), 1577-1630 (APTP…ADAS), and 1635-1654 (LAMAQKTEQSQSTAPDATQK). Residues 1191–1203 (RLSQSSGQSQRSL) show a composition bias toward low complexity. Residues 1204–1213 (LKSEEAEMRR) are compositionally biased toward basic and acidic residues. Polar residues-rich tracts occupy residues 1277–1286 (PSSQMGQPEN), 1604–1618 (PQSTLDKAASFQSAR), and 1640–1654 (KTEQSQSTAPDATQK). Residues 1723 to 2040 (PWFMSCMDTQ…QKHYYTAMKK (318 aa)) form an III repeat. The chain crosses the membrane as a helical span at residues 1743-1763 (AVLTVVDTPAFEWFVLVLIFA). At 1764–1789 (SSITLCFEDINLDKNKTLKRVLYWIN) the chain is on the extracellular side. N-linked (GlcNAc...) asparagine glycans are attached at residues N1778 and N1789. Residues 1790 to 1810 (FSFCLIFVVEMILKWLALGFS) traverse the membrane as a helical segment. Topologically, residues 1811-1813 (KYF) are cytoplasmic. Residues 1814–1834 (TSFWTILDFIIVFVSVFSLLI) traverse the membrane as a helical segment. Residues 1835–1839 (EENEN) are Extracellular-facing. Residues 1840 to 1861 (LKVLRSLRTLRALRPLRAISRW) traverse the membrane as a helical; Voltage-sensor segment. Residues 1862 to 1880 (QGMRIVVNALMYAIPSIFN) are Cytoplasmic-facing. The helical transmembrane segment at 1881-1902 (VLLVCLVFWLIFSIMGVQFFGG) threads the bilayer. The Extracellular segment spans residues 1903 to 1943 (KFFKCVNEMGELLPITEVNDKWDCIEQNYTWINSKITFDHV). The N-linked (GlcNAc...) asparagine glycan is linked to N1930. The pore-forming intramembrane region spans 1944-1965 (GMGYLALLQVATFEGWMEVMAD). At 1966–1981 (AVDARGVDLQPQREAN) the chain is on the extracellular side. A helical membrane pass occupies residues 1982–2002 (LYAYIYFVIFIVCGSFFTLNL). At 2003–2069 (FIGVIIDNFN…MFYDLSNSRR (67 aa)) the chain is on the cytoplasmic side. An IV repeat occupies 2050 to 2311 (IKRPINHFLA…NMYIAIILEN (262 aa)). A helical transmembrane segment spans residues 2070 to 2090 (FEIAIFVLIFLNMLTMGIEHY). At 2091–2095 (DQPHA) the chain is on the extracellular side. Residues 2096–2116 (VFFILEVSNAFFTTVFGLEAI) traverse the membrane as a helical segment. Residues 2117 to 2132 (VKIVGLRYHYFTVPWN) lie on the Cytoplasmic side of the membrane. Residues 2133 to 2153 (VFDFLLVLASIFGILMEDIMI) form a helical membrane-spanning segment. Residues 2154–2162 (DLPISPTLL) are Extracellular-facing. The helical; Voltage-sensor transmembrane segment at 2163–2184 (RVVRVFRIGRILRLIKAAKGIR) threads the bilayer. Over 2185–2199 (KLLFALVVSLPALFN) the chain is Cytoplasmic. The chain crosses the membrane as a helical span at residues 2200–2220 (IGALLGLITFIYAILGMSLFG). Residues 2221-2236 (NVKLQGALDDMVNFQT) lie on the Extracellular side of the membrane. Positions 2237–2259 (FGRSMQLLFRLMTSAGWNDVLES) form an intramembrane region, pore-forming. Residues 2260 to 2288 (LMIQPPDCDPFIHGHTNGNCGHPLLAITY) lie on the Extracellular side of the membrane. The helical transmembrane segment at 2289-2309 (FTSFIIISYMIVINMYIAIIL) threads the bilayer. Residues 2310-2844 (ENFNQAHQEE…QFESLPDRQR (535 aa)) are Cytoplasmic-facing. Residues 2441 to 2470 (QEKAAKTIQTGWKEYLRRKREKERSNSGDS) enclose the IQ domain. Disordered stretches follow at residues 2457-2479 (RRKREKERSNSGDSATQTSSPGG), 2584-2668 (SLTS…LSAQ), 2780-2802 (DSPKDPPRGDFSSAPIDDVGAPI), and 2818-2844 (NPEKATDDQGNGQDETAQFESLPDRQR). Polar residues predominate over residues 2467-2479 (SGDSATQTSSPGG). Residues 2595–2632 (AMNNTTNTTSNSASTSGTASSTATAPATGCGPAATSAS) are compositionally biased toward low complexity. The segment covering 2647-2658 (SRKRASSFIRKK) has biased composition (basic residues). Polar residues predominate over residues 2825-2836 (DQGNGQDETAQF).

This sequence belongs to the sodium channel (TC 1.A.1.10) family. NaCP60E subfamily. In embryonic and larval stages, expression is limited to very few non-neuronal cells in either the CNS or PNS. In pupal and adult stages, expressed in cell bodies of the fly central nervous system, including optic lobes, central brain, subesophageal ganglion, thoracico-abdominal ganglion, major olfactory organs, the third antennal segment and the maxillary palps.

It localises to the cell membrane. Its function is as follows. Mediates the voltage-dependent sodium ion permeability of excitable membranes. Plays a role in processing of olfactory information during the olfactory avoidance response. The protein is Sodium channel protein 60E (NaCP60E) of Drosophila melanogaster (Fruit fly).